The following is a 56-amino-acid chain: Small ribosomal subunit protein uS14 (56 aa).

This sequence belongs to the universal ribosomal protein uS14 family.

In Kluyveromyces lactis (strain ATCC 8585 / CBS 2359 / DSM 70799 / NBRC 1267 / NRRL Y-1140 / WM37) (Yeast), this protein is Small ribosomal subunit protein uS14 (RPS29).